Reading from the N-terminus, the 192-residue chain is Small ribosomal subunit protein uS4c-2 (192 aa).

Residues 91-155 (TRLDHLVYRA…PKPPEYLPPY (65 aa)) enclose the S4 RNA-binding domain.

The protein belongs to the universal ribosomal protein uS4 family. Part of the 30S ribosomal subunit. Contacts protein S5. The interaction surface between S4 and S5 is involved in control of translational fidelity.

Its subcellular location is the plastid. It localises to the chloroplast. Its function is as follows. One of the primary rRNA binding proteins, it binds directly to 16S rRNA where it nucleates assembly of the body of the 30S subunit. With S5 and S12 plays an important role in translational accuracy. The sequence is that of Small ribosomal subunit protein uS4c-2 from Cyanidium caldarium (Red alga).